We begin with the raw amino-acid sequence, 116 residues long: uncharacterized protein (116 aa).

The next 2 membrane-spanning stretches (helical) occupy residues 55 to 77 (LSYS…LYSF) and 87 to 109 (FSYG…YAAL).

It localises to the membrane. This is an uncharacterized protein from Saccharomyces cerevisiae (strain ATCC 204508 / S288c) (Baker's yeast).